Reading from the N-terminus, the 101-residue chain is Nucleoid-associated protein Acid345_1974 (101 aa).

Belongs to the YbaB/EbfC family. In terms of assembly, homodimer.

It localises to the cytoplasm. It is found in the nucleoid. Its function is as follows. Binds to DNA and alters its conformation. May be involved in regulation of gene expression, nucleoid organization and DNA protection. The polypeptide is Nucleoid-associated protein Acid345_1974 (Koribacter versatilis (strain Ellin345)).